The primary structure comprises 290 residues: Arylamine N-acetyltransferase 1 (290 aa).

Position 1 is an N-acetylmethionine (methionine 1). Serine 103 serves as a coordination point for CoA. Residue isoleucine 106–histidine 107 participates in substrate binding. Tyrosine 208 serves as a coordination point for CoA.

This sequence belongs to the arylamine N-acetyltransferase family.

The protein resides in the cytoplasm. The enzyme catalyses an arylamine + acetyl-CoA = an N-acetylarylamine + CoA. Its function is as follows. Participates in the detoxification of a plethora of hydrazine and arylamine drugs. The polypeptide is Arylamine N-acetyltransferase 1 (NAT1) (Bos taurus (Bovine)).